Reading from the N-terminus, the 525-residue chain is Nuclear pore glycoprotein p62 (525 aa).

The residue at position 2 (Ser-2) is an N-acetylserine. A run of 5 repeats spans residues 6-7 (FG), 46-47 (FG), 78-79 (FG), 115-116 (FG), and 143-144 (FG). A 5 X 2 AA repeats of F-G region spans residues 6–144 (FGGTGAPAGG…GTAPTGFVFG (139 aa)). The tract at residues 260–293 (LKAPGAAPGASTTSTTTTTTTTTTTASTSSSTTT) is disordered. Over residues 269 to 293 (ASTTSTTTTTTTTTTTASTSSSTTT) the composition is skewed to low complexity. Residues 331 to 461 (MTYAQLESLI…QDLKDIIEHL (131 aa)) are required for centrosome localization. Residues 331–461 (MTYAQLESLI…QDLKDIIEHL (131 aa)) are a coiled coil. Phosphoserine is present on residues Ser-411 and Ser-421. A glycan (O-linked (GlcNAc) serine) is linked at Ser-471.

Belongs to the nucleoporin NSP1/NUP62 family. As to quaternary structure, component of the p62 complex, a complex at least composed of NUP62, NUP54, and NUP58. Interacts with NUP88. Interacts with NUTF2. Interacts with HIKESHI. Interacts with OSBPL8. Interacts with CAPG. Interacts with SAS6 and TUBG1 at the centrosome. Interacts with MCM3AP. The inner channel of the NPC has a different redox environment from the cytoplasm and allows the formation of interchain disulfide bonds between some nucleoporins, the significant increase of these linkages upon oxidative stress reduces the permeability of the NPC.

The protein localises to the nucleus. The protein resides in the nuclear pore complex. Its subcellular location is the cytoplasm. It localises to the cytoskeleton. It is found in the spindle pole. The protein localises to the nucleus envelope. The protein resides in the microtubule organizing center. Its subcellular location is the centrosome. Essential component of the nuclear pore complex. The N-terminal is probably involved in nucleocytoplasmic transport. The C-terminal is involved in protein-protein interaction probably via coiled-coil formation, promotes its association with centrosomes and may function in anchorage of p62 to the pore complex. Plays a role in mitotic cell cycle progression by regulating centrosome segregation, centriole maturation and spindle orientation. It might be involved in protein recruitment to the centrosome after nuclear breakdown. The polypeptide is Nuclear pore glycoprotein p62 (Nup62) (Rattus norvegicus (Rat)).